The chain runs to 207 residues: LexA repressor (207 aa).

A DNA-binding region (H-T-H motif) is located at residues 28-48 (VREIGEAVGLASSSTVHGHLA). Residues serine 129 and lysine 167 each act as for autocatalytic cleavage activity in the active site.

Belongs to the peptidase S24 family. Homodimer.

The enzyme catalyses Hydrolysis of Ala-|-Gly bond in repressor LexA.. Its function is as follows. Represses a number of genes involved in the response to DNA damage (SOS response), including recA and lexA. In the presence of single-stranded DNA, RecA interacts with LexA causing an autocatalytic cleavage which disrupts the DNA-binding part of LexA, leading to derepression of the SOS regulon and eventually DNA repair. The protein is LexA repressor of Geobacillus sp. (strain WCH70).